We begin with the raw amino-acid sequence, 95 residues long: DNA-directed RNA polymerase subunit Rpo11 (95 aa).

This sequence belongs to the archaeal Rpo11/eukaryotic RPB11/RPC19 RNA polymerase subunit family. In terms of assembly, part of the RNA polymerase complex.

It localises to the cytoplasm. The enzyme catalyses RNA(n) + a ribonucleoside 5'-triphosphate = RNA(n+1) + diphosphate. Its function is as follows. DNA-dependent RNA polymerase (RNAP) catalyzes the transcription of DNA into RNA using the four ribonucleoside triphosphates as substrates. This is DNA-directed RNA polymerase subunit Rpo11 from Thermococcus sibiricus (strain DSM 12597 / MM 739).